Consider the following 317-residue polypeptide: DNA-directed RNA polymerase subunit alpha 2 (317 aa).

The interval 1–227 is alpha N-terminal domain (alpha-NTD); it reads MALENLLHPT…NQLRNIVDIE (227 aa). The alpha C-terminal domain (alpha-CTD) stretch occupies residues 241 to 317; it reads INPILLKHVE…TLIENWPQDL (77 aa).

This sequence belongs to the RNA polymerase alpha chain family. In terms of assembly, homodimer. The RNAP catalytic core consists of 2 alpha, 1 beta, 1 beta' and 1 omega subunit. When a sigma factor is associated with the core the holoenzyme is formed, which can initiate transcription.

The enzyme catalyses RNA(n) + a ribonucleoside 5'-triphosphate = RNA(n+1) + diphosphate. Functionally, DNA-dependent RNA polymerase catalyzes the transcription of DNA into RNA using the four ribonucleoside triphosphates as substrates. This Francisella tularensis subsp. holarctica (strain LVS) protein is DNA-directed RNA polymerase subunit alpha 2.